The primary structure comprises 558 residues: T-complex protein 1 subunit eta (558 aa).

The segment at V524–K558 is disordered.

It belongs to the TCP-1 chaperonin family. In terms of assembly, heterooligomeric complex of about 850 to 900 kDa that forms two stacked rings, 12 to 16 nm in diameter.

Its subcellular location is the cytoplasm. Molecular chaperone; assists the folding of proteins upon ATP hydrolysis. Known to play a role, in vitro, in the folding of actin and tubulin. In Tetrahymena pyriformis, this protein is T-complex protein 1 subunit eta.